The following is a 1160-amino-acid chain: Large proline-rich protein BAG6 (1160 aa).

Positions 7 to 82 constitute a Ubiquitin-like domain; that stretch reads IEVTVKTLDS…HLVERPPPQS (76 aa). 8 disordered regions span residues 76-114, 206-261, 367-422, 478-547, 563-628, 672-711, 962-1038, and 1126-1160; these read ERPPPQSSQPGGGGGGVSGSSGAADGGSSSSQSSAYTTS, EGQS…HPSP, IPMN…GQGT, ASAG…QTNQ, GDQT…DNLA, SGQPVFPSPNQQPPPSQATPPSAPSGPAPTTAPSGGAETL, SARR…AEPW, and YAQQVKSDIKKRLSDDPDYNHQRFPNTHRVFSEDA. Residues 85 to 94 show a composition bias toward gly residues; the sequence is PGGGGGGVSG. Low complexity-rich tracts occupy residues 95-110 and 223-233; these read SSGAADGGSSSSQSSA and SSSSFSAHPMD. Polar residues-rich tracts occupy residues 247–257 and 371–417; these read QTEGETQSGPN and LGST…QQTG. Low complexity-rich tracts occupy residues 478-495 and 566-614; these read ASAGHQGQQQGTAGAGAQ and TSTT…STAS. Over residues 677–698 the composition is skewed to pro residues; the sequence is FPSPNQQPPPSQATPPSAPSGP. Low complexity predominate over residues 699–708; that stretch reads APTTAPSGGA. Residues 1132-1146 are compositionally biased toward basic and acidic residues; sequence SDIKKRLSDDPDYNH.

As to quaternary structure, component of the bag6/bat3 complex.

The protein localises to the cytoplasm. The protein resides in the cytosol. Its subcellular location is the nucleus. It localises to the secreted. It is found in the extracellular exosome. Functionally, ATP-independent molecular chaperone preventing the aggregation of misfolded and hydrophobic patches-containing proteins. Functions as part of a cytosolic protein quality control complex, the bag6/bat3 complex, which maintains these client proteins in a soluble state and participates in their proper delivery to the endoplasmic reticulum or alternatively can promote their sorting to the proteasome where they undergo degradation. The bag6/bat3 complex is involved in the post-translational delivery of tail-anchored/type II transmembrane proteins to the endoplasmic reticulum membrane. Similarly, the bag6/bat3 complex also functions as a sorting platform for proteins of the secretory pathway that are mislocalized to the cytosol either delivering them to the proteasome for degradation or to the endoplasmic reticulum. The bag6/bat3 complex also plays a role in the endoplasmic reticulum-associated degradation (ERAD), a quality control mechanism that eliminates unwanted proteins of the endoplasmic reticulum through their retrotranslocation to the cytosol and their targeting to the proteasome. It maintains these retrotranslocated proteins in an unfolded yet soluble state condition in the cytosol to ensure their proper delivery to the proteasome. Also required for selective ubiquitin-mediated degradation of defective nascent chain polypeptides by the proteasome. Also involved in endoplasmic reticulum stress-induced pre-emptive quality control, a mechanism that selectively attenuates the translocation of newly synthesized proteins into the endoplasmic reticulum and reroutes them to the cytosol for proteasomal degradation. May ensure the proper degradation of these proteins and thereby protects the endoplasmic reticulum from protein overload upon stress. By stabilizing a large spectrum of proteins, may indirectly affect different biological processes including apoptosis. By controlling the steady-state expression of the IGF1R receptor, indirectly regulates the insulin-like growth factor receptor signaling pathway. In terms of biological role, when nuclear, may also act as a component of some chromatin regulator complex. In Danio rerio (Zebrafish), this protein is Large proline-rich protein BAG6.